The primary structure comprises 309 residues: MANSLFQKHIISIPELNRSELELIVETAGILKAEPNPELLKNKVVASCFFEPSTRTRLSFETAVQRLGGTVIGFDNGGNTSLAKKGETLADSVQVISSYVDAFVMRHPQEGAARLASEFSNGVPIINGGDGANQHPTQTLLDLFSIFETQGRLDNLNVAFVGDLKYGRTVHSLTQALSKFNNINFFFVAPEILAMPDYICEELDEAGINYSLHASMEEVIPELDVLYMTRVQKERFDESEYAHMKAAYILTADMLAEARDNMKILHPLPRIDEITVDVDKTKHAYYFQQAENGVYAREALLALVLNEQL.

Positions 55 and 56 each coordinate carbamoyl phosphate. Residue lysine 85 coordinates L-aspartate. Carbamoyl phosphate contacts are provided by arginine 106, histidine 135, and glutamine 138. L-aspartate contacts are provided by arginine 168 and arginine 230. Leucine 268 and proline 269 together coordinate carbamoyl phosphate.

The protein belongs to the aspartate/ornithine carbamoyltransferase superfamily. ATCase family. In terms of assembly, heterododecamer (2C3:3R2) of six catalytic PyrB chains organized as two trimers (C3), and six regulatory PyrI chains organized as three dimers (R2).

The catalysed reaction is carbamoyl phosphate + L-aspartate = N-carbamoyl-L-aspartate + phosphate + H(+). Its pathway is pyrimidine metabolism; UMP biosynthesis via de novo pathway; (S)-dihydroorotate from bicarbonate: step 2/3. Its function is as follows. Catalyzes the condensation of carbamoyl phosphate and aspartate to form carbamoyl aspartate and inorganic phosphate, the committed step in the de novo pyrimidine nucleotide biosynthesis pathway. This is Aspartate carbamoyltransferase catalytic subunit from Photobacterium profundum (strain SS9).